A 329-amino-acid polypeptide reads, in one-letter code: 4-hydroxythreonine-4-phosphate dehydrogenase (329 aa).

Positions 136 and 137 each coordinate substrate. Residues histidine 166, histidine 211, and histidine 266 each contribute to the a divalent metal cation site. Substrate-binding residues include lysine 274, asparagine 283, and arginine 292.

This sequence belongs to the PdxA family. As to quaternary structure, homodimer. The cofactor is Zn(2+). Requires Mg(2+) as cofactor. It depends on Co(2+) as a cofactor.

Its subcellular location is the cytoplasm. The enzyme catalyses 4-(phosphooxy)-L-threonine + NAD(+) = 3-amino-2-oxopropyl phosphate + CO2 + NADH. Its pathway is cofactor biosynthesis; pyridoxine 5'-phosphate biosynthesis; pyridoxine 5'-phosphate from D-erythrose 4-phosphate: step 4/5. Catalyzes the NAD(P)-dependent oxidation of 4-(phosphooxy)-L-threonine (HTP) into 2-amino-3-oxo-4-(phosphooxy)butyric acid which spontaneously decarboxylates to form 3-amino-2-oxopropyl phosphate (AHAP). This chain is 4-hydroxythreonine-4-phosphate dehydrogenase, found in Escherichia coli (strain SE11).